Here is a 287-residue protein sequence, read N- to C-terminus: Diphthine methyl ester synthase (287 aa).

S-adenosyl-L-methionine is bound by residues leucine 9, aspartate 84, glycine 87, 112–113 (SI), leucine 163, valine 221, and histidine 248.

The protein belongs to the diphthine synthase family.

The protein resides in the cytoplasm. It catalyses the reaction 2-[(3S)-amino-3-carboxypropyl]-L-histidyl-[translation elongation factor 2] + 4 S-adenosyl-L-methionine = diphthine methyl ester-[translation elongation factor 2] + 4 S-adenosyl-L-homocysteine + 3 H(+). It participates in protein modification; peptidyl-diphthamide biosynthesis. Its function is as follows. S-adenosyl-L-methionine-dependent methyltransferase that catalyzes four methylations of the modified target histidine residue in translation elongation factor 2 (EF-2), to form an intermediate called diphthine methyl ester. The four successive methylation reactions represent the second step of diphthamide biosynthesis. This Neurospora crassa (strain ATCC 24698 / 74-OR23-1A / CBS 708.71 / DSM 1257 / FGSC 987) protein is Diphthine methyl ester synthase (dph-5).